The chain runs to 376 residues: General transcription factor IIH subunit 2 (376 aa).

The VWFA domain maps to 64–206 (HVMIVIDCSR…NIRCSAIGLS (143 aa)). A C4-type zinc finger spans residues 286–303 (CTQCGARHCSIPAECPVC).

Belongs to the GTF2H2 family. Component of the 7-subunit TFIIH core complex composed of xpb-1, xpd-1, gtf-2H1, gtf-2H2C, gtf-2H3, Y73F8A.24 and gtf-2H5, which is active in NER. The core complex associates with the 3-subunit CDK-activating kinase (CAK) module composed of cyh-1, cdk-7 and mnat-1 to form the 10-subunit holoenzyme (holo-TFIIH) active in transcription.

The protein localises to the nucleus. Its function is as follows. Component of the general transcription and DNA repair factor IIH (TFIIH) core complex, which is involved in general and transcription-coupled nucleotide excision repair (NER) of damaged DNA and, when complexed to CAK, in RNA transcription by RNA polymerase II. In NER, TFIIH acts by opening DNA around the lesion to allow the excision of the damaged oligonucleotide and its replacement by a new DNA fragment. In transcription, TFIIH has an essential role in transcription initiation. When the pre-initiation complex (PIC) has been established, TFIIH is required for promoter opening and promoter escape. Phosphorylation of the C-terminal tail (CTD) of the largest subunit of RNA polymerase II by the kinase module CAK controls the initiation of transcription. In Caenorhabditis elegans, this protein is General transcription factor IIH subunit 2.